A 162-amino-acid chain; its full sequence is Probable ergosterol biosynthetic protein 28 homolog (162 aa).

Helical transmembrane passes span 7–25, 40–60, 69–89, and 96–116; these read AWMS…MCYA, LSRA…VLIF, IAHI…VFFY, and IVTV…LTFL.

This sequence belongs to the ERG28 family. As to expression, expressed in tissues including muscles, intestine and neurons.

It localises to the endoplasmic reticulum membrane. The protein resides in the cell projection. It is found in the dendrite. In terms of biological role, promotes the translocation of slo-1 potassium ion channels from the endoplasmic reticulum to its final destination at the plasma membrane, probably by shielding from premature proteasomal degradation in the endoplasmic reticulum. Maintains the levels of slo-1 potassium ion channel at the presynaptic neurons. The sequence is that of Probable ergosterol biosynthetic protein 28 homolog from Caenorhabditis elegans.